Consider the following 858-residue polypeptide: M-phase phosphoprotein 8 (858 aa).

The segment at 18–55 is disordered; the sequence is VPDSIGRSPESEGVGAGDEEKDAATKGTVAVGDSEEDG. Phosphoserine occurs at positions 51, 85, 136, and 138. A Chromo domain is found at 59–118; that stretch reads FEVERILDMKCEGGKNLYKVRWKGYTSEDDTWEPEVHLEDCKEVLLEFRKKLAENKAKAV. Residues 80-87 form a histone H3K9me3 binding region; it reads WKGYTSED. The interval 129–175 is disordered; that stretch reads NDIFEADSDSDQQSDTKEDISPRKKKKKIKCKEETSPEDLRKKRTKM. Thr144 is subject to Phosphothreonine. A phosphoserine; by CDK1 mark is found at Ser149 and Ser164. Basic and acidic residues predominate over residues 159–169; the sequence is CKEETSPEDLR. Ser188 carries the phosphoserine modification. 2 disordered regions span residues 209-234 and 250-300; these read ELKDSKKPKKDEIKETKELKKANKRA and NRKT…DKTA. Ser267, Ser271, and Ser278 each carry phosphoserine. Over residues 273–282 the composition is skewed to acidic residues; it reads ILEDDSEDFI. Over residues 283-300 the composition is skewed to basic and acidic residues; it reads SDNREENQNVRSVRDKTA. Ser318 carries the post-translational modification Phosphoserine. The disordered stretch occupies residues 321–431; that stretch reads EDAGTRVRRK…YDLDKEEKAR (111 aa). The span at 335 to 357 shows a compositional bias: basic and acidic residues; it reads RKFEEPKEIKKLESTNAFLERRA. Residue Thr385 is modified to Phosphothreonine; by CDK1. 2 positions are modified to phosphoserine: Ser392 and Ser400. A compositionally biased stretch (basic and acidic residues) spans 407–431; sequence EKEKKNEPKGKYQKRYDLDKEEKAR. Thr453 carries the post-translational modification Phosphothreonine. ANK repeat units lie at residues 598–627, 631–660, 664–693, and 697–726; these read TGMTLVMLAAAGGQDDLLRLLITKGAKVNG, NGTTALIHAAEKNFLTTVAILLEAGAFVNV, NGETALMKACKRGNSDIVRLVIECGADCNI, and HQNSALYFAKQCNNVLVYELLKSHLETLSR.

As to quaternary structure, homodimer. Interacts (via chromo domain) with histone H3K9me3. Has the highest affinity for H3K9me3, and lesser affinity for H3K9me2 and H3K9me1. Component of the HUSH complex; at least composed of TASOR, PPHLN1 and MPHOSPH8. Interacts with DNMT3, EHMT1 and SETDB1. Interacts with MORC2; the interaction associateS MORC2 with the HUSH complex which recruits MORC2 to heterochromatic loci. Interacts with ZNF638; leading to recruitment of the HUSH complex to unintegrated retroviral DNA. Interacts with TASOR. In terms of processing, phosphorylated in M (mitotic) phase. Phosphorylation by CDK1 promotes dissociation from chromatin. Expressed in the spermatogonia, spermatocytes and granular cells within the cerebellum.

The protein localises to the nucleus. It localises to the chromosome. In terms of biological role, heterochromatin component that specifically recognizes and binds methylated 'Lys-9' of histone H3 (H3K9me) and promotes recruitment of proteins that mediate epigenetic repression. Mediates recruitment of the HUSH complex to H3K9me3 sites: the HUSH complex is recruited to genomic loci rich in H3K9me3 and is required to maintain transcriptional silencing by promoting recruitment of SETDB1, a histone methyltransferase that mediates further deposition of H3K9me3, as well as MORC2. Binds H3K9me and promotes DNA methylation by recruiting DNMT3A to target CpG sites; these can be situated within the coding region of the gene. Mediates down-regulation of CDH1 expression. Also represses L1 retrotransposons in collaboration with MORC2 and, probably, SETDB1, the silencing is dependent of repressive epigenetic modifications, such as H3K9me3 mark. Silencing events often occur within introns of transcriptionally active genes, and lead to the down-regulation of host gene expression. The HUSH complex is also involved in the silencing of unintegrated retroviral DNA by being recruited by ZNF638: some part of the retroviral DNA formed immediately after infection remains unintegrated in the host genome and is transcriptionally repressed. The sequence is that of M-phase phosphoprotein 8 from Mus musculus (Mouse).